Consider the following 690-residue polypeptide: Probable xyloglucan glycosyltransferase 1 (690 aa).

Helical transmembrane passes span 120–140 (AFLLLSVLLLAVDVAAHAQGW) and 166–186 (LEYLAPGLQFLANACVVLFLI). The active site involves aspartate 272. Substrate is bound by residues aspartate 331 and aspartate 333. Aspartate 425 is an active-site residue. Helical transmembrane passes span 503–523 (LILPFYSFTLFCIILPMTMFV) and 528–548 (LPAWVVCYIPATMSLLNILPA). Residues 607 to 637 (QPKQQRVGSAPNLDSLAKESHPKKDSKKKKH) form a disordered region. Helical transmembrane passes span 640 to 659 (IYQKELALSFLLLTAAARSL) and 665 to 685 (IHFYFLLFQGVSFLVVGLDLI).

Belongs to the glycosyltransferase 2 family. Plant cellulose synthase-like C subfamily.

It localises to the golgi apparatus membrane. Probable beta-1,4-glucan synthase rather involved in the synthesis of the xyloglucan backbone than cellulose. Seems to work simultaneously with xyloglucan 6-xylosyltransferase. Xyloglucan is a noncellulosic polysaccharides of plant cell wall and consists of a glucan backbone substituted by xylose, galactose and fucose. In Oryza sativa subsp. japonica (Rice), this protein is Probable xyloglucan glycosyltransferase 1 (CSLC1).